A 441-amino-acid chain; its full sequence is Xylose isomerase (441 aa).

Active-site residues include H99 and D102. Mg(2+) contacts are provided by E230, E266, H269, D294, D305, D307, and D337.

The protein belongs to the xylose isomerase family. Homotetramer. It depends on Mg(2+) as a cofactor.

It is found in the cytoplasm. The enzyme catalyses alpha-D-xylose = alpha-D-xylulofuranose. Exhibits xylose isomerase activity. This chain is Xylose isomerase (xylA), found in Bacillus sp. (strain LW2).